The sequence spans 738 residues: AP-4 complex subunit beta-1 (738 aa).

A hinge region spans residues 534–600 (CSPKSDPSLG…NASFATSGHL (67 aa)). Residues 601-738 (ISEENKEGAQ…VIGTVGDIKS (138 aa)) form an ear; mediates interaction with TEPSIN region.

It belongs to the adaptor complexes large subunit family. Adaptor protein complex 4 (AP-4) is a heterotetramer composed of two large adaptins (epsilon-type subunit AP4E1 and beta-type subunit AP4B1), a medium adaptin (mu-type subunit AP4M1) and a small adaptin (sigma-type AP4S1). Interacts with TEPSIN; this interaction requires the presence of a functional AP-4 complex. Interacts with GRIA2; probably indirect it mediates the somatodendritic localization of GRIA2 in neurons.

It localises to the golgi apparatus. The protein localises to the trans-Golgi network membrane. Component of the adaptor protein complex 4 (AP-4). Adaptor protein complexes are vesicle coat components involved both in vesicle formation and cargo selection. They control the vesicular transport of proteins in different trafficking pathways. AP-4 forms a non clathrin-associated coat on vesicles departing the trans-Golgi network (TGN) and may be involved in the targeting of proteins from the trans-Golgi network (TGN) to the endosomal-lysosomal system. It is also involved in protein sorting to the basolateral membrane in epithelial cells and the proper asymmetric localization of somatodendritic proteins in neurons. AP-4 is involved in the recognition and binding of tyrosine-based sorting signals found in the cytoplasmic part of cargos, but may also recognize other types of sorting signal. In Mus musculus (Mouse), this protein is AP-4 complex subunit beta-1.